We begin with the raw amino-acid sequence, 100 residues long: Apolipoprotein C-II (100 aa).

Positions 1 to 22 (MGSRFLLALFLVLLVLGCEVQA) are cleaved as a signal peptide. The segment at 66-74 (SVDEKLRDM) is lipid binding. Residues 78–100 (SSAAMTTYASIFTDQILTLLKGE) are lipoprotein lipase cofactor.

It belongs to the apolipoprotein C2 family. In terms of processing, proapolipoprotein C-II is synthesized as a sialic acid containing glycoprotein which is subsequently desialylated prior to its proteolytic processing. Post-translationally, proapolipoprotein C-II, the major form found in plasma undergoes proteolytic cleavage of its N-terminal hexapeptide to generate the mature form apolipoprotein C-II, which occurs as the minor form in plasma.

The protein resides in the secreted. Its function is as follows. Component of chylomicrons, very low-density lipoproteins (VLDL), low-density lipoproteins (LDL), and high-density lipoproteins (HDL) in plasma. Plays an important role in lipoprotein metabolism as an activator of lipoprotein lipase. The chain is Apolipoprotein C-II (APOC2) from Ellobius talpinus (Northern mole vole).